We begin with the raw amino-acid sequence, 511 residues long: Cytochrome P450 714C3 (511 aa).

Topologically, residues 1–6 (MEKLLA) are lumenal. The helical; Signal-anchor for type III membrane protein transmembrane segment at 7–27 (LIVVLVILLSLALFYLCNILW) threads the bilayer. The Cytoplasmic segment spans residues 28–511 (LRAVKIRKKL…GLPLMVTKLP (484 aa)). Cysteine 458 lines the heme pocket.

The protein belongs to the cytochrome P450 family. Requires heme as cofactor.

It is found in the membrane. In Oryza sativa subsp. japonica (Rice), this protein is Cytochrome P450 714C3 (CYP714C3).